The sequence spans 347 residues: GMP reductase (347 aa).

108-131 (TDFIKLSEILAKSEDLNFICIDIA) provides a ligand contact to NADP(+). 2 residues coordinate K(+): Gly181 and Gly183. Catalysis depends on Cys186, which acts as the Thioimidate intermediate. 216-239 (IIGDGGCSCAGDVAKAFGGGADFV) contributes to the NADP(+) binding site.

It belongs to the IMPDH/GMPR family. GuaC type 1 subfamily. In terms of assembly, homotetramer.

The catalysed reaction is IMP + NH4(+) + NADP(+) = GMP + NADPH + 2 H(+). In terms of biological role, catalyzes the irreversible NADPH-dependent deamination of GMP to IMP. It functions in the conversion of nucleobase, nucleoside and nucleotide derivatives of G to A nucleotides, and in maintaining the intracellular balance of A and G nucleotides. The sequence is that of GMP reductase from Shewanella pealeana (strain ATCC 700345 / ANG-SQ1).